The chain runs to 810 residues: RING finger protein unkempt homolog (810 aa).

The disordered stretch occupies residues 1 to 24; the sequence is MSKGPGPGGSAASSAPPAATAQVL. The segment covering 10-19 has biased composition (low complexity); sequence SAASSAPPAA. 5 consecutive C3H1-type zinc fingers follow at residues 84 to 113, 124 to 154, 215 to 241, 251 to 285, and 293 to 321; these read YSPD…HRTT, YYKT…HGPH, NYKT…HNSK, KYRS…HTRT, and IYKS…HIEP. A disordered region spans residues 239–265; the sequence is NSKDRRRSPRKHKYRSSPCPNVKHGDE. A Phosphoserine modification is found at Ser-240. Positions 241–253 are enriched in basic residues; it reads KDRRRSPRKHKYR. Ser-374, Ser-378, Ser-385, and Ser-394 each carry phosphoserine. The tract at residues 478-497 is disordered; it reads TSSLAATPPSPAGTNSTPGM. Ser-631 bears the Phosphoserine mark. The stretch at 643–727 forms a coiled coil; that stretch reads GAAELARLRQ…ERLHTVPEAQ (85 aa). An RING-type; degenerate zinc finger spans residues 766-801; sequence SVKCLKCQEQTRAVLPCQHAVLCELCAEGSECPVCQ.

It belongs to the unkempt family.

It localises to the cytoplasm. Sequence-specific RNA-binding protein which plays an important role in the establishment and maintenance of the early morphology of cortical neurons during embryonic development. Acts as a translation repressor and controls a translationally regulated cell morphology program to ensure proper structuring of the nervous system. Translational control depends on recognition of its binding element within target mRNAs which consists of a mandatory UAG trimer upstream of a U/A-rich motif. Associated with polysomes. In Mus musculus (Mouse), this protein is RING finger protein unkempt homolog (Unk).